The primary structure comprises 256 residues: ATP synthase peripheral stalk subunit b, mitochondrial (256 aa).

The N-terminal 42 residues, 1-42, are a transit peptide targeting the mitochondrion; the sequence is MLSRVVLSAAATAASSLKNAAFLGPGVLQATRTFHTGQPHLA. An N6-succinyllysine modification is found at lysine 131. An N6-acetyllysine mark is found at lysine 139, lysine 154, lysine 162, lysine 221, lysine 233, and lysine 244.

This sequence belongs to the eukaryotic ATPase B chain family. In terms of assembly, component of the ATP synthase complex composed at least of ATP5F1A/subunit alpha, ATP5F1B/subunit beta, ATP5MC1/subunit c (homooctomer), MT-ATP6/subunit a, MT-ATP8/subunit 8, ATP5ME/subunit e, ATP5MF/subunit f, ATP5MG/subunit g, ATP5MK/subunit k, ATP5MJ/subunit j, ATP5F1C/subunit gamma, ATP5F1D/subunit delta, ATP5F1E/subunit epsilon, ATP5PF/subunit F6, ATP5PB/subunit b, ATP5PD/subunit d, ATP5PO/subunit OSCP. ATP synthase complex consists of a soluble F(1) head domain (subunits alpha(3) and beta(3)) - the catalytic core - and a membrane F(0) domain - the membrane proton channel (subunits c, a, 8, e, f, g, k and j). These two domains are linked by a central stalk (subunits gamma, delta, and epsilon) rotating inside the F1 region and a stationary peripheral stalk (subunits F6, b, d, and OSCP).

It is found in the mitochondrion. Its subcellular location is the mitochondrion inner membrane. Functionally, subunit b, of the mitochondrial membrane ATP synthase complex (F(1)F(0) ATP synthase or Complex V) that produces ATP from ADP in the presence of a proton gradient across the membrane which is generated by electron transport complexes of the respiratory chain. ATP synthase complex consist of a soluble F(1) head domain - the catalytic core - and a membrane F(1) domain - the membrane proton channel. These two domains are linked by a central stalk rotating inside the F(1) region and a stationary peripheral stalk. During catalysis, ATP synthesis in the catalytic domain of F(1) is coupled via a rotary mechanism of the central stalk subunits to proton translocation. In vivo, can only synthesize ATP although its ATP hydrolase activity can be activated artificially in vitro. Part of the complex F(0) domain. Part of the complex F(0) domain and the peripheric stalk, which acts as a stator to hold the catalytic alpha(3)beta(3) subcomplex and subunit a/ATP6 static relative to the rotary elements. This is ATP synthase peripheral stalk subunit b, mitochondrial from Pongo abelii (Sumatran orangutan).